Consider the following 93-residue polypeptide: Pyrimidine/purine nucleoside phosphorylase (93 aa).

It belongs to the nucleoside phosphorylase PpnP family.

The enzyme catalyses a purine D-ribonucleoside + phosphate = a purine nucleobase + alpha-D-ribose 1-phosphate. It catalyses the reaction adenosine + phosphate = alpha-D-ribose 1-phosphate + adenine. The catalysed reaction is cytidine + phosphate = cytosine + alpha-D-ribose 1-phosphate. It carries out the reaction guanosine + phosphate = alpha-D-ribose 1-phosphate + guanine. The enzyme catalyses inosine + phosphate = alpha-D-ribose 1-phosphate + hypoxanthine. It catalyses the reaction thymidine + phosphate = 2-deoxy-alpha-D-ribose 1-phosphate + thymine. The catalysed reaction is uridine + phosphate = alpha-D-ribose 1-phosphate + uracil. It carries out the reaction xanthosine + phosphate = alpha-D-ribose 1-phosphate + xanthine. Its function is as follows. Catalyzes the phosphorolysis of diverse nucleosides, yielding D-ribose 1-phosphate and the respective free bases. Can use uridine, adenosine, guanosine, cytidine, thymidine, inosine and xanthosine as substrates. Also catalyzes the reverse reactions. The protein is Pyrimidine/purine nucleoside phosphorylase of Pseudomonas syringae pv. tomato (strain ATCC BAA-871 / DC3000).